The sequence spans 146 residues: Ubiquitin-conjugating enzyme E2 variant 1D (146 aa).

Residues 13–146 enclose the UBC core domain; sequence PRNFRLLEEL…LVQPPEGTCF (134 aa).

Belongs to the ubiquitin-conjugating enzyme family. In terms of assembly, heterodimer with UBC35 or UBC36. In terms of tissue distribution, expressed in roots, shoots, leaves, stems, flowers and pollen.

In terms of biological role, has no ubiquitin ligase activity on its own. The heterodimer with UBC catalyzes the synthesis of non-canonical poly-ubiquitin chains that are linked through 'Lys-63'. This type of poly-ubiquitination does not lead to protein degradation by the proteasome. Mediates transcriptional activation of target genes. May play a role in the control of progress through the cell cycle and differentiation. Involved in the error-free DNA repair pathway and contributes to the survival of cells after DNA damage. The protein is Ubiquitin-conjugating enzyme E2 variant 1D (UEV1D) of Arabidopsis thaliana (Mouse-ear cress).